A 517-amino-acid polypeptide reads, in one-letter code: Putative alpha-L-fucosidase 1 (517 aa).

An N-terminal signal peptide occupies residues 1–20 (MATILLLLLGLLVGLPLLRA). 7 N-linked (GlcNAc...) asparagine glycosylation sites follow: Asn119, Asn249, Asn296, Asn321, Asn352, Asn496, and Asn511.

This sequence belongs to the glycosyl hydrolase 29 family.

It is found in the secreted. Its subcellular location is the extracellular space. It localises to the apoplast. It carries out the reaction an alpha-L-fucoside + H2O = L-fucose + an alcohol. Functionally, alpha-L-fucosidase is responsible for hydrolyzing the alpha-1,6-linked fucose joined to the reducing-end N-acetylglucosamine of the carbohydrate moieties of glycoproteins. Active only against 2'-fucosyl-lactitol when heterologously expressed. The sequence is that of Putative alpha-L-fucosidase 1 from Oryza sativa subsp. japonica (Rice).